A 348-amino-acid polypeptide reads, in one-letter code: Protein pelota homolog (348 aa).

The protein belongs to the eukaryotic release factor 1 family. Pelota subfamily. As to quaternary structure, monomer. The cofactor is a divalent metal cation.

It is found in the cytoplasm. Its function is as follows. May function in recognizing stalled ribosomes, interact with stem-loop structures in stalled mRNA molecules, and effect endonucleolytic cleavage of the mRNA. May play a role in the release non-functional ribosomes and degradation of damaged mRNAs. Has endoribonuclease activity. The polypeptide is Protein pelota homolog (Methanococcus maripaludis (strain C5 / ATCC BAA-1333)).